We begin with the raw amino-acid sequence, 565 residues long: NAD-dependent malic enzyme (565 aa).

Tyrosine 104 serves as the catalytic Proton donor. Arginine 157 contributes to the NAD(+) binding site. Residue lysine 175 is the Proton acceptor of the active site. A divalent metal cation contacts are provided by glutamate 246, aspartate 247, and aspartate 270. NAD(+) is bound by residues aspartate 270 and asparagine 418.

It belongs to the malic enzymes family. Homotetramer. It depends on Mg(2+) as a cofactor. Mn(2+) is required as a cofactor.

It catalyses the reaction (S)-malate + NAD(+) = pyruvate + CO2 + NADH. The enzyme catalyses oxaloacetate + H(+) = pyruvate + CO2. The protein is NAD-dependent malic enzyme of Escherichia coli (strain SMS-3-5 / SECEC).